We begin with the raw amino-acid sequence, 357 residues long: Probable GTP 3',8-cyclase (357 aa).

The 230-residue stretch at 5–234 (DFGRDVSGVR…DRRRYWVSSR (230 aa)) folds into the Radical SAM core domain. Residue arginine 14 participates in GTP binding. [4Fe-4S] cluster-binding residues include cysteine 21 and cysteine 25. Tyrosine 27 is an S-adenosyl-L-methionine binding site. Cysteine 28 serves as a coordination point for [4Fe-4S] cluster. GTP is bound at residue lysine 68. Glycine 72 lines the S-adenosyl-L-methionine pocket. Threonine 96 contacts GTP. Serine 120 lines the S-adenosyl-L-methionine pocket. Residue lysine 157 coordinates GTP. Residues 232 to 256 (SSRDAGSTADDAAQSVTPDGGAHPD) are disordered. [4Fe-4S] cluster contacts are provided by cysteine 272 and cysteine 275. 277-279 (RVR) is a GTP binding site. A [4Fe-4S] cluster-binding site is contributed by cysteine 289.

The protein belongs to the radical SAM superfamily. MoaA family. [4Fe-4S] cluster serves as cofactor.

The enzyme catalyses GTP + AH2 + S-adenosyl-L-methionine = (8S)-3',8-cyclo-7,8-dihydroguanosine 5'-triphosphate + 5'-deoxyadenosine + L-methionine + A + H(+). The protein operates within cofactor biosynthesis; molybdopterin biosynthesis. Catalyzes the cyclization of GTP to (8S)-3',8-cyclo-7,8-dihydroguanosine 5'-triphosphate. This is Probable GTP 3',8-cyclase from Halobacterium salinarum (strain ATCC 29341 / DSM 671 / R1).